We begin with the raw amino-acid sequence, 148 residues long: Glutamyl-tRNA(Gln) amidotransferase subunit C, mitochondrial (148 aa).

It belongs to the GatC family. In terms of assembly, subunit of the heterotrimeric GatCAB amidotransferase (AdT) complex, composed of A, B and C subunits.

The protein localises to the mitochondrion. It catalyses the reaction L-glutamyl-tRNA(Gln) + L-glutamine + ATP + H2O = L-glutaminyl-tRNA(Gln) + L-glutamate + ADP + phosphate + H(+). Allows the formation of correctly charged Gln-tRNA(Gln) through the transamidation of misacylated Glu-tRNA(Gln) in the mitochondria. The reaction takes place in the presence of glutamine and ATP through an activated gamma-phospho-Glu-tRNA(Gln). The sequence is that of Glutamyl-tRNA(Gln) amidotransferase subunit C, mitochondrial from Drosophila melanogaster (Fruit fly).